Consider the following 430-residue polypeptide: Glutamate-1-semialdehyde 2,1-aminomutase (430 aa).

Residue K267 is modified to N6-(pyridoxal phosphate)lysine.

It belongs to the class-III pyridoxal-phosphate-dependent aminotransferase family. HemL subfamily. In terms of assembly, homodimer. Pyridoxal 5'-phosphate is required as a cofactor.

The protein localises to the cytoplasm. It catalyses the reaction (S)-4-amino-5-oxopentanoate = 5-aminolevulinate. It functions in the pathway porphyrin-containing compound metabolism; protoporphyrin-IX biosynthesis; 5-aminolevulinate from L-glutamyl-tRNA(Glu): step 2/2. In Anaeromyxobacter sp. (strain K), this protein is Glutamate-1-semialdehyde 2,1-aminomutase.